The chain runs to 353 residues: Probable butyrate kinase (353 aa).

It belongs to the acetokinase family.

The protein localises to the cytoplasm. It catalyses the reaction butanoate + ATP = butanoyl phosphate + ADP. The chain is Probable butyrate kinase from Bacteroides thetaiotaomicron (strain ATCC 29148 / DSM 2079 / JCM 5827 / CCUG 10774 / NCTC 10582 / VPI-5482 / E50).